The following is a 72-amino-acid chain: AAPYVIFGAKVPPHWLAIGTILTVVGGIYGPKAFSSPAAAAPAATPAAAPSSEPELDVEKAINDFLASDKKE.

As to quaternary structure, F-type ATP synthases have 2 components, the catalytic core F(1) and the membrane-embedded component F(0), linked together by a central stalk and a peripheral stalk. The central stalk, also called rotor shaft, is often seen as part of F(1). The peripheral stalk is seen as part of F(0). F(0) contains the membrane channel next to the rotor. F-type ATP synthases form dimers but each monomer functions independently in ATP generation. The dimer consists of 18 different polypeptides: ATP1 (subunit alpha, part of F(1), 3 molecules per monomer), ATP2 (subunit beta, part of F(1), 3 molecules per monomer), ATP3 (subunit gamma, part of the central stalk), ATP4 (subunit b, part of the peripheral stalk), ATP5/OSCP (subunit 5/OSCP, part of the peripheral stalk), ATP6 (subunit a, part of the peripheral stalk), ATP7 (subunit d, part of the peripheral stalk), ATP8 (subunit 8, part of the peripheral stalk), OLI1 (subunit c, part of the rotor, 10 molecules per monomer), ATP14 (subunit h, part of the peripheral stalk), ATP15 (subunit epsilon, part of the central stalk), ATP16 (subunit delta, part of the central stalk), ATP17 (subunit f, part of the peripheral stalk), ATP18 (subunit i/j, part of the peripheral stalk). Dimer-specific subunits are ATP19 (subunit k, at interface between monomers), ATP20 (subunit g, at interface between monomers), TIM11 (subunit e, at interface between monomers). Also contains subunit L.

It localises to the mitochondrion inner membrane. Functionally, mitochondrial membrane ATP synthase (F(1)F(0) ATP synthase or Complex V) produces ATP from ADP in the presence of a proton gradient across the membrane which is generated by electron transport complexes of the respiratory chain. F-type ATP synthases consist of two structural domains, F(1) - containing the extramembraneous catalytic core, and F(0) - containing the membrane proton channel, linked together by a central stalk and a peripheral stalk. During catalysis, ATP synthesis in the catalytic domain of F(1) is coupled via a rotary mechanism of the central stalk subunits to proton translocation. This Pichia angusta (Yeast) protein is ATP synthase subunit L.